We begin with the raw amino-acid sequence, 425 residues long: Glucose-1-phosphate adenylyltransferase (425 aa).

Alpha-D-glucose 1-phosphate contacts are provided by residues Y109, G175, 190 to 191 (EK), and S208.

This sequence belongs to the bacterial/plant glucose-1-phosphate adenylyltransferase family. As to quaternary structure, homotetramer.

The catalysed reaction is alpha-D-glucose 1-phosphate + ATP + H(+) = ADP-alpha-D-glucose + diphosphate. Its pathway is glycan biosynthesis; glycogen biosynthesis. Functionally, involved in the biosynthesis of ADP-glucose, a building block required for the elongation reactions to produce glycogen. Catalyzes the reaction between ATP and alpha-D-glucose 1-phosphate (G1P) to produce pyrophosphate and ADP-Glc. The polypeptide is Glucose-1-phosphate adenylyltransferase (Saccharophagus degradans (strain 2-40 / ATCC 43961 / DSM 17024)).